Consider the following 306-residue polypeptide: ATP synthase gamma chain (306 aa).

This sequence belongs to the ATPase gamma chain family. As to quaternary structure, F-type ATPases have 2 components, CF(1) - the catalytic core - and CF(0) - the membrane proton channel. CF(1) has five subunits: alpha(3), beta(3), gamma(1), delta(1), epsilon(1). CF(0) has three main subunits: a, b and c.

The protein resides in the cell membrane. Its function is as follows. Produces ATP from ADP in the presence of a proton gradient across the membrane. The gamma chain is believed to be important in regulating ATPase activity and the flow of protons through the CF(0) complex. The polypeptide is ATP synthase gamma chain (Bifidobacterium adolescentis (strain ATCC 15703 / DSM 20083 / NCTC 11814 / E194a)).